Here is a 654-residue protein sequence, read N- to C-terminus: Sphingosine kinase 2 (654 aa).

Basic and acidic residues predominate over residues 1 to 17 (MNGHLEAEEQQDQRPDQ). Positions 1-28 (MNGHLEAEEQQDQRPDQELTGSWGHGPR) are disordered. Positions 1–175 (MNGHLEAEEQ…LPGDGEITPD (175 aa)) are required for binding to sulfatide and phosphoinositides and for membrane localizatione. A Nuclear localization signal motif is present at residues 122 to 130 (RGRRGARRR). The region spanning 178–325 (PRPPRLLLLV…LDLLSVTLAS (148 aa)) is the DAGKc domain. Residues 188-190 (NPF) and 220-224 (TERQN) each bind ATP. 245 to 248 (SGDG) is a binding site for substrate. Aspartate 247 serves as the catalytic Proton donor/acceptor. ATP contacts are provided by residues glutamate 252 and 277-279 (GSG). Aspartate 344 is a substrate binding site. Arginine 351 and arginine 357 together coordinate ATP. Serine 387 is modified (phosphoserine; by MAPK). Serine 393 and serine 399 each carry phosphoserine. The segment at 400–509 (ELTLTPDPAP…PLPTPDARVG (110 aa)) is disordered. The Nuclear export signal motif lies at 416–425 (LHRSVSDLPL). 2 positions are modified to phosphoserine; by PKD: serine 419 and serine 421. The segment covering 447-461 (NGGGPELAGDWGGAG) has biased composition (gly residues). A compositionally biased stretch (low complexity) spans 462 to 482 (DAPLSPDPLLSSPPGSPKAAL). Serine 477 carries the post-translational modification Phosphoserine. Residue threonine 614 is modified to Phosphothreonine; by MAPK. 622–624 (DGE) lines the ATP pocket.

In terms of assembly, interacts with histone H3. Interacts with HDAC1, HDAC2, MBD2 and SIN3A. Interacts with EEF1A1; the interaction enhances SPHK2 kinase activity. Interacts with PHB2. Mg(2+) is required as a cofactor. Post-translationally, phosphorylated by PKD on Ser-419 and Ser-421 upon PMA treatment. Phosphorylation induces export from the nucleus to the cytoplasm. Phosphorylated by MAPK1 and MAPK2 at Ser-387 and Thr-614, phosphorylation is induced by agonists such as EGF and PMA and increases kinase activity. In terms of processing, cleaved by CASP1 in apoptotic cells. The truncated form is released from cells. Mainly expressed in adult kidney, liver, and brain. Expressed in cerebral cortex and hippocampus (at protein level). Isoform 1 is the predominant form expressed in most tissues.

It localises to the cytoplasm. The protein localises to the nucleus. The protein resides in the endoplasmic reticulum. It is found in the mitochondrion inner membrane. Its subcellular location is the lysosome membrane. It catalyses the reaction a sphingoid base + ATP = a sphingoid 1-phosphate + ADP + H(+). The enzyme catalyses sphing-4-enine + ATP = sphing-4-enine 1-phosphate + ADP + H(+). The catalysed reaction is sphinganine + ATP = sphinganine 1-phosphate + ADP + H(+). It carries out the reaction (4R)-hydroxysphinganine + ATP = (4R)-hydroxysphinganine 1-phosphate + ADP + H(+). With respect to regulation, inhibited by sulfatide. Kinase activity is increased by phosphorylation by MAPK2 upon PMA or EGF treatments. In terms of biological role, catalyzes the phosphorylation of sphingosine to form sphingosine-1-phosphate (SPP), a lipid mediator with both intra- and extracellular functions. Also acts on D-erythro-dihydrosphingosine, D-erythro-sphingosine and L-threo-dihydrosphingosine. Binds phosphoinositides. In contrast to prosurvival SPHK1, has a positive effect on intracellular ceramide levels, inhibits cells growth and enhances apoptosis. In mitochondria, is important for cytochrome-c oxidase assembly and mitochondrial respiration. The SPP produced in mitochondria binds PHB2 and modulates the regulation via PHB2 of complex IV assembly and respiration. In nucleus, plays a role in epigenetic regulation of gene expression. Interacts with HDAC1 and HDAC2 and, through SPP production, inhibits their enzymatic activity, preventing the removal of acetyl groups from lysine residues with histones. Up-regulates acetylation of histone H3-K9, histone H4-K5 and histone H2B-K12. In nucleus, may have an inhibitory effect on DNA synthesis and cell cycle. In mast cells, is the main regulator of SPP production which mediates calcium influx, NF-kappa-B activation, cytokine production, such as TNF and IL6, and degranulation of mast cells. In dopaminergic neurons, is involved in promoting mitochondrial functions regulating ATP and ROS levels. Also involved in the regulation of glucose and lipid metabolism. This chain is Sphingosine kinase 2, found in Homo sapiens (Human).